A 481-amino-acid polypeptide reads, in one-letter code: Hyaluronidase-4 (481 aa).

Residues 1–11 (MQLLPEGQLRL) are Cytoplasmic-facing. Residues 12–32 (CVFQPVHLTSGLLILFILKSI) traverse the membrane as a helical segment. At 33 to 455 (SSLKPARLPV…CREMTEASGP (423 aa)) the chain is on the extracellular side. Disulfide bonds link Cys59/Cys351, Cys223/Cys237, Cys376/Cys387, Cys381/Cys435, and Cys437/Cys446. N-linked (GlcNAc...) asparagine glycosylation is found at Asn64 and Asn115. The active-site Proton donor is Glu147. Residues Asn232 and Asn343 are each glycosylated (N-linked (GlcNAc...) asparagine). Residues 456–476 (SGLSLSSSSVITLCLLVLAGY) traverse the membrane as a helical segment. Topologically, residues 477 to 481 (QSIQL) are cytoplasmic.

Belongs to the glycosyl hydrolase 56 family.

It is found in the membrane. It carries out the reaction Random hydrolysis of (1-&gt;4)-linkages between N-acetyl-beta-D-glucosamine and D-glucuronate residues in hyaluronate.. Functionally, endo-hyaluronidase that degrades hyaluronan to smaller oligosaccharide fragments. Also has chondroitin sulfate hydrolase activity, The best substrate being the galactosaminidic linkage in the sequence of a trisulfated tetrasaccharide. This chain is Hyaluronidase-4 (Hyal4), found in Mus musculus (Mouse).